Reading from the N-terminus, the 150-residue chain is Large ribosomal subunit protein bL9 (150 aa).

The protein belongs to the bacterial ribosomal protein bL9 family.

In terms of biological role, binds to the 23S rRNA. This Burkholderia multivorans (strain ATCC 17616 / 249) protein is Large ribosomal subunit protein bL9.